Reading from the N-terminus, the 172-residue chain is Protein GrpE (172 aa).

This sequence belongs to the GrpE family. In terms of assembly, homodimer.

The protein localises to the cytoplasm. Functionally, participates actively in the response to hyperosmotic and heat shock by preventing the aggregation of stress-denatured proteins, in association with DnaK and GrpE. It is the nucleotide exchange factor for DnaK and may function as a thermosensor. Unfolded proteins bind initially to DnaJ; upon interaction with the DnaJ-bound protein, DnaK hydrolyzes its bound ATP, resulting in the formation of a stable complex. GrpE releases ADP from DnaK; ATP binding to DnaK triggers the release of the substrate protein, thus completing the reaction cycle. Several rounds of ATP-dependent interactions between DnaJ, DnaK and GrpE are required for fully efficient folding. The protein is Protein GrpE of Thermotoga sp. (strain RQ2).